The sequence spans 114 residues: Protein ELF4-LIKE 4 (114 aa).

Positions Ser-87–Gly-114 are disordered. A compositionally biased stretch (polar residues) spans Asp-89 to Leu-100.

The protein belongs to the EARLY FLOWERING 4 family. Homodimer.

The protein resides in the nucleus. Component of the central CCA1/LHY-TOC1 feedback loop in the circadian clock that promotes clock accuracy and is required for sustained rhythms in the absence of daily light/dark cycles. This chain is Protein ELF4-LIKE 4 (EFL4), found in Arabidopsis thaliana (Mouse-ear cress).